A 451-amino-acid polypeptide reads, in one-letter code: Bifunctional protein GlmU (451 aa).

Residues 1-229 (MQRHAIILAA…FDEIIGVNDR (229 aa)) form a pyrophosphorylase region. UDP-N-acetyl-alpha-D-glucosamine contacts are provided by residues 8–11 (LAAG), lysine 22, glutamine 72, and 77–78 (GT). Aspartate 102 is a binding site for Mg(2+). Positions 139, 154, and 227 each coordinate UDP-N-acetyl-alpha-D-glucosamine. Position 227 (asparagine 227) interacts with Mg(2+). Positions 230 to 250 (LMLSEAEKALQQRINRYHMEN) are linker. The N-acetyltransferase stretch occupies residues 251–451 (GVTIIDPSST…QVNKEGYLKK (201 aa)). UDP-N-acetyl-alpha-D-glucosamine-binding residues include arginine 332 and lysine 350. Residue histidine 362 is the Proton acceptor of the active site. Positions 365 and 376 each coordinate UDP-N-acetyl-alpha-D-glucosamine. Acetyl-CoA is bound by residues 385 to 386 (NY), alanine 422, and arginine 439.

This sequence in the N-terminal section; belongs to the N-acetylglucosamine-1-phosphate uridyltransferase family. It in the C-terminal section; belongs to the transferase hexapeptide repeat family. As to quaternary structure, homotrimer. The cofactor is Mg(2+).

The protein localises to the cytoplasm. It catalyses the reaction alpha-D-glucosamine 1-phosphate + acetyl-CoA = N-acetyl-alpha-D-glucosamine 1-phosphate + CoA + H(+). The enzyme catalyses N-acetyl-alpha-D-glucosamine 1-phosphate + UTP + H(+) = UDP-N-acetyl-alpha-D-glucosamine + diphosphate. The protein operates within nucleotide-sugar biosynthesis; UDP-N-acetyl-alpha-D-glucosamine biosynthesis; N-acetyl-alpha-D-glucosamine 1-phosphate from alpha-D-glucosamine 6-phosphate (route II): step 2/2. It participates in nucleotide-sugar biosynthesis; UDP-N-acetyl-alpha-D-glucosamine biosynthesis; UDP-N-acetyl-alpha-D-glucosamine from N-acetyl-alpha-D-glucosamine 1-phosphate: step 1/1. It functions in the pathway bacterial outer membrane biogenesis; LPS lipid A biosynthesis. Its function is as follows. Catalyzes the last two sequential reactions in the de novo biosynthetic pathway for UDP-N-acetylglucosamine (UDP-GlcNAc). The C-terminal domain catalyzes the transfer of acetyl group from acetyl coenzyme A to glucosamine-1-phosphate (GlcN-1-P) to produce N-acetylglucosamine-1-phosphate (GlcNAc-1-P), which is converted into UDP-GlcNAc by the transfer of uridine 5-monophosphate (from uridine 5-triphosphate), a reaction catalyzed by the N-terminal domain. The polypeptide is Bifunctional protein GlmU (Staphylococcus epidermidis).